The chain runs to 196 residues: Recombination protein RecR (196 aa).

The C4-type zinc-finger motif lies at 57–72 (CERCNTFTEAPVCSTC). In terms of domain architecture, Toprim spans 80–175 (RQLCVVETPA…SVTRLARGVP (96 aa)).

The protein belongs to the RecR family.

Functionally, may play a role in DNA repair. It seems to be involved in an RecBC-independent recombinational process of DNA repair. It may act with RecF and RecO. The chain is Recombination protein RecR from Methylibium petroleiphilum (strain ATCC BAA-1232 / LMG 22953 / PM1).